The following is a 493-amino-acid chain: Ecdysteroid UDP-glucosyltransferase (493 aa).

A signal peptide spans 1-17 (MIFILLTTLLAVGGAQT).

The protein belongs to the UDP-glycosyltransferase family.

Catalyzes the transfer of glucose from UDP-glucose to ecdysteroids which are insect molting hormones. Expression of egt interferes with normal insect development and block molting. The protein is Ecdysteroid UDP-glucosyltransferase (egt) of Choristoneura fumiferana defective polyhedrosis virus (Cfdef).